The chain runs to 248 residues: UPF0736 protein BCE33L1074 (248 aa).

This sequence belongs to the UPF0736 family.

The sequence is that of UPF0736 protein BCE33L1074 from Bacillus cereus (strain ZK / E33L).